A 91-amino-acid polypeptide reads, in one-letter code: Small ribosomal subunit protein uS19 (91 aa).

The protein belongs to the universal ribosomal protein uS19 family.

Protein S19 forms a complex with S13 that binds strongly to the 16S ribosomal RNA. This chain is Small ribosomal subunit protein uS19, found in Aromatoleum aromaticum (strain DSM 19018 / LMG 30748 / EbN1) (Azoarcus sp. (strain EbN1)).